Consider the following 155-residue polypeptide: Peptide methionine sulfoxide reductase MsrB (155 aa).

The MsrB domain occupies Arg15–Thr137. Positions 54, 57, 103, and 106 each coordinate Zn(2+). The active-site Nucleophile is the Cys126.

It belongs to the MsrB Met sulfoxide reductase family. It depends on Zn(2+) as a cofactor.

The enzyme catalyses L-methionyl-[protein] + [thioredoxin]-disulfide + H2O = L-methionyl-(R)-S-oxide-[protein] + [thioredoxin]-dithiol. This is Peptide methionine sulfoxide reductase MsrB from Xylella fastidiosa (strain 9a5c).